A 230-amino-acid polypeptide reads, in one-letter code: Large ribosomal subunit protein uL1 (230 aa).

Belongs to the universal ribosomal protein uL1 family. As to quaternary structure, part of the 50S ribosomal subunit.

In terms of biological role, binds directly to 23S rRNA. The L1 stalk is quite mobile in the ribosome, and is involved in E site tRNA release. Its function is as follows. Protein L1 is also a translational repressor protein, it controls the translation of the L11 operon by binding to its mRNA. The sequence is that of Large ribosomal subunit protein uL1 from Metamycoplasma arthritidis (strain 158L3-1) (Mycoplasma arthritidis).